A 150-amino-acid polypeptide reads, in one-letter code: FAD synthase (150 aa).

ATP contacts are provided by residues 11-12, 16-19, D96, and Y124; these read TF and HPGH.

It belongs to the archaeal FAD synthase family. As to quaternary structure, homodimer. A divalent metal cation serves as cofactor.

It carries out the reaction FMN + ATP + H(+) = FAD + diphosphate. Its pathway is cofactor biosynthesis; FAD biosynthesis; FAD from FMN: step 1/1. In terms of biological role, catalyzes the transfer of the AMP portion of ATP to flavin mononucleotide (FMN) to produce flavin adenine dinucleotide (FAD) coenzyme. In Methanocaldococcus fervens (strain DSM 4213 / JCM 15782 / AG86) (Methanococcus fervens), this protein is FAD synthase.